The primary structure comprises 274 residues: Penicillin-insensitive murein endopeptidase (274 aa).

An N-terminal signal peptide occupies residues 1–19 (MKKTAIALLAWFVSSASLA). Disulfide bonds link Cys44–Cys265, Cys187–Cys235, and Cys216–Cys223. Residues His110, His113, Asp120, Asp147, His150, and His211 each contribute to the Zn(2+) site. Residues 225–274 (DQPLPPPGDGCGAELQSWFEPPKPGTTKPEKKTPPPLPPSCQALLDEHVL) are disordered.

The protein belongs to the peptidase M74 family. As to quaternary structure, dimer. Zn(2+) serves as cofactor.

The protein localises to the periplasm. In terms of biological role, murein endopeptidase that cleaves the D-alanyl-meso-2,6-diamino-pimelyl amide bond that connects peptidoglycan strands. Likely plays a role in the removal of murein from the sacculus. The polypeptide is Penicillin-insensitive murein endopeptidase (Salmonella arizonae (strain ATCC BAA-731 / CDC346-86 / RSK2980)).